Reading from the N-terminus, the 303-residue chain is Uracil phosphoribosyltransferase (303 aa).

Positions 1–86 (MHIIMKTILA…RYVSSTPTDS (86 aa)) are unknown. Positions 87–303 (LSSKPLAAVY…DRLCGTSNPS (217 aa)) are UPRTase. 5-phospho-alpha-D-ribose 1-diphosphate is bound by residues Arg-170, Arg-195, and 222–230 (DPMLATGGS). Uracil contacts are provided by residues Ile-285 and 290–292 (GDA). Asp-291 contacts 5-phospho-alpha-D-ribose 1-diphosphate.

The protein belongs to the UPRTase family. Mg(2+) serves as cofactor.

The enzyme catalyses UMP + diphosphate = 5-phospho-alpha-D-ribose 1-diphosphate + uracil. It functions in the pathway pyrimidine metabolism; UMP biosynthesis via salvage pathway; UMP from uracil: step 1/1. Its activity is regulated as follows. Allosterically activated by GTP. Functionally, catalyzes the conversion of uracil and 5-phospho-alpha-D-ribose 1-diphosphate (PRPP) to UMP and diphosphate. This is Uracil phosphoribosyltransferase (upp) from Chlamydia muridarum (strain MoPn / Nigg).